Consider the following 354-residue polypeptide: DNA replication and repair protein RecF (354 aa).

30 to 37 (GDNGSGKT) provides a ligand contact to ATP.

This sequence belongs to the RecF family.

The protein localises to the cytoplasm. Functionally, the RecF protein is involved in DNA metabolism; it is required for DNA replication and normal SOS inducibility. RecF binds preferentially to single-stranded, linear DNA. It also seems to bind ATP. The protein is DNA replication and repair protein RecF of Idiomarina loihiensis (strain ATCC BAA-735 / DSM 15497 / L2-TR).